Consider the following 370-residue polypeptide: Lipoyl synthase, mitochondrial (370 aa).

Residues Cys100, Cys105, Cys111, Cys131, Cys135, Cys138, and Ser346 each contribute to the [4Fe-4S] cluster site. The Radical SAM core domain occupies 116-335; sequence DKSRATATIM…KEVAEKLGFL (220 aa).

The protein belongs to the radical SAM superfamily. Lipoyl synthase family. [4Fe-4S] cluster serves as cofactor.

The protein resides in the mitochondrion. The catalysed reaction is [[Fe-S] cluster scaffold protein carrying a second [4Fe-4S](2+) cluster] + N(6)-octanoyl-L-lysyl-[protein] + 2 oxidized [2Fe-2S]-[ferredoxin] + 2 S-adenosyl-L-methionine + 4 H(+) = [[Fe-S] cluster scaffold protein] + N(6)-[(R)-dihydrolipoyl]-L-lysyl-[protein] + 4 Fe(3+) + 2 hydrogen sulfide + 2 5'-deoxyadenosine + 2 L-methionine + 2 reduced [2Fe-2S]-[ferredoxin]. It functions in the pathway protein modification; protein lipoylation via endogenous pathway; protein N(6)-(lipoyl)lysine from octanoyl-[acyl-carrier-protein]: step 2/2. Its function is as follows. Catalyzes the radical-mediated insertion of two sulfur atoms into the C-6 and C-8 positions of the octanoyl moiety bound to the lipoyl domains of lipoate-dependent enzymes, thereby converting the octanoylated domains into lipoylated derivatives. This is Lipoyl synthase, mitochondrial (lip5) from Schizosaccharomyces pombe (strain 972 / ATCC 24843) (Fission yeast).